The sequence spans 194 residues: tRNA (guanine-N(1)-)-methyltransferase (194 aa).

Residues glycine 78 and 97-102 (IGDYVL) contribute to the S-adenosyl-L-methionine site.

The protein belongs to the RNA methyltransferase TrmD family. Homodimer.

Its subcellular location is the cytoplasm. It carries out the reaction guanosine(37) in tRNA + S-adenosyl-L-methionine = N(1)-methylguanosine(37) in tRNA + S-adenosyl-L-homocysteine + H(+). In terms of biological role, specifically methylates guanosine-37 in various tRNAs. The chain is tRNA (guanine-N(1)-)-methyltransferase from Mycoplasma mobile (strain ATCC 43663 / 163K / NCTC 11711) (Mesomycoplasma mobile).